Consider the following 438-residue polypeptide: Anaerobic glycerol-3-phosphate dehydrogenase subunit B (438 aa).

It belongs to the anaerobic G-3-P dehydrogenase subunit B family. As to quaternary structure, composed of a catalytic GlpA/B dimer and of membrane bound GlpC. FMN serves as cofactor.

It catalyses the reaction a quinone + sn-glycerol 3-phosphate = dihydroxyacetone phosphate + a quinol. Its pathway is polyol metabolism; glycerol degradation via glycerol kinase pathway; glycerone phosphate from sn-glycerol 3-phosphate (anaerobic route): step 1/1. Its function is as follows. Conversion of glycerol 3-phosphate to dihydroxyacetone. Uses fumarate or nitrate as electron acceptor. This Vibrio vulnificus (strain CMCP6) protein is Anaerobic glycerol-3-phosphate dehydrogenase subunit B.